Here is a 126-residue protein sequence, read N- to C-terminus: Glycine cleavage system H protein (126 aa).

A Lipoyl-binding domain is found at 24-105 (TLTVGITDHA…AYGVWLFKLK (82 aa)). N6-lipoyllysine is present on lysine 65.

It belongs to the GcvH family. As to quaternary structure, the glycine cleavage system is composed of four proteins: P, T, L and H. (R)-lipoate serves as cofactor.

Functionally, the glycine cleavage system catalyzes the degradation of glycine. The H protein shuttles the methylamine group of glycine from the P protein to the T protein. The sequence is that of Glycine cleavage system H protein from Burkholderia vietnamiensis (strain G4 / LMG 22486) (Burkholderia cepacia (strain R1808)).